The primary structure comprises 446 residues: Tubulin beta-6 chain (446 aa).

The MREI motif motif lies at 1–4; sequence MREI. Residues glutamine 11, glutamate 69, serine 138, glycine 142, threonine 143, glycine 144, asparagine 204, and asparagine 226 each contribute to the GTP site. Glutamate 69 serves as a coordination point for Mg(2+). Residues 419-446 form a disordered region; it reads VSEYQQYQDATADVEEYEEAEASPEKET. Positions 430–440 are enriched in acidic residues; the sequence is ADVEEYEEAEA.

Belongs to the tubulin family. As to quaternary structure, dimer of alpha and beta chains. A typical microtubule is a hollow water-filled tube with an outer diameter of 25 nm and an inner diameter of 15 nM. Alpha-beta heterodimers associate head-to-tail to form protofilaments running lengthwise along the microtubule wall with the beta-tubulin subunit facing the microtubule plus end conferring a structural polarity. Microtubules usually have 13 protofilaments but different protofilament numbers can be found in some organisms and specialized cells. Mg(2+) serves as cofactor. Some glutamate residues at the C-terminus are polyglycylated, resulting in polyglycine chains on the gamma-carboxyl group. Glycylation is mainly limited to tubulin incorporated into axonemes (cilia and flagella) whereas glutamylation is prevalent in neuronal cells, centrioles, axonemes, and the mitotic spindle. Both modifications can coexist on the same protein on adjacent residues, and lowering polyglycylation levels increases polyglutamylation, and reciprocally. The precise function of polyglycylation is still unclear. Post-translationally, some glutamate residues at the C-terminus are polyglutamylated, resulting in polyglutamate chains on the gamma-carboxyl group. Polyglutamylation plays a key role in microtubule severing by spastin (SPAST). SPAST preferentially recognizes and acts on microtubules decorated with short polyglutamate tails: severing activity by SPAST increases as the number of glutamates per tubulin rises from one to eight, but decreases beyond this glutamylation threshold. As to expression, highly expressed in bone marrow.

It localises to the cytoplasm. The protein resides in the cytoskeleton. In terms of biological role, tubulin is the major constituent of microtubules, a cylinder consisting of laterally associated linear protofilaments composed of alpha- and beta-tubulin heterodimers. Microtubules grow by the addition of GTP-tubulin dimers to the microtubule end, where a stabilizing cap forms. Below the cap, tubulin dimers are in GDP-bound state, owing to GTPase activity of alpha-tubulin. The chain is Tubulin beta-6 chain from Gallus gallus (Chicken).